A 427-amino-acid chain; its full sequence is 3-phosphoshikimate 1-carboxyvinyltransferase (427 aa).

Residues Lys-22, Ser-23, and Arg-27 each coordinate 3-phosphoshikimate. Lys-22 lines the phosphoenolpyruvate pocket. Residues Gly-96 and Arg-124 each contribute to the phosphoenolpyruvate site. 7 residues coordinate 3-phosphoshikimate: Ser-169, Ser-170, Gln-171, Ser-197, Asp-313, Asn-336, and Lys-340. Residue Gln-171 participates in phosphoenolpyruvate binding. Asp-313 functions as the Proton acceptor in the catalytic mechanism. Residues Arg-344, Arg-386, and Lys-411 each coordinate phosphoenolpyruvate.

Belongs to the EPSP synthase family. In terms of assembly, monomer.

The protein resides in the cytoplasm. It carries out the reaction 3-phosphoshikimate + phosphoenolpyruvate = 5-O-(1-carboxyvinyl)-3-phosphoshikimate + phosphate. Its pathway is metabolic intermediate biosynthesis; chorismate biosynthesis; chorismate from D-erythrose 4-phosphate and phosphoenolpyruvate: step 6/7. In terms of biological role, catalyzes the transfer of the enolpyruvyl moiety of phosphoenolpyruvate (PEP) to the 5-hydroxyl of shikimate-3-phosphate (S3P) to produce enolpyruvyl shikimate-3-phosphate and inorganic phosphate. This Salmonella newport (strain SL254) protein is 3-phosphoshikimate 1-carboxyvinyltransferase.